We begin with the raw amino-acid sequence, 184 residues long: ATP synthase subunit b, chloroplastic (184 aa).

Residues L27–L49 traverse the membrane as a helical segment.

The protein belongs to the ATPase B chain family. F-type ATPases have 2 components, F(1) - the catalytic core - and F(0) - the membrane proton channel. F(1) has five subunits: alpha(3), beta(3), gamma(1), delta(1), epsilon(1). F(0) has four main subunits: a(1), b(1), b'(1) and c(10-14). The alpha and beta chains form an alternating ring which encloses part of the gamma chain. F(1) is attached to F(0) by a central stalk formed by the gamma and epsilon chains, while a peripheral stalk is formed by the delta, b and b' chains.

The protein resides in the plastid. It localises to the chloroplast thylakoid membrane. Its function is as follows. F(1)F(0) ATP synthase produces ATP from ADP in the presence of a proton or sodium gradient. F-type ATPases consist of two structural domains, F(1) containing the extramembraneous catalytic core and F(0) containing the membrane proton channel, linked together by a central stalk and a peripheral stalk. During catalysis, ATP synthesis in the catalytic domain of F(1) is coupled via a rotary mechanism of the central stalk subunits to proton translocation. Functionally, component of the F(0) channel, it forms part of the peripheral stalk, linking F(1) to F(0). This chain is ATP synthase subunit b, chloroplastic, found in Nasturtium officinale (Watercress).